The primary structure comprises 199 residues: Small heat shock protein hspG4 (199 aa).

Positions Asn-30–Asn-199 constitute a sHSP domain. The disordered stretch occupies residues Lys-83–Pro-105.

This sequence belongs to the small heat shock protein (HSP20) family.

In Dictyostelium discoideum (Social amoeba), this protein is Small heat shock protein hspG4 (hspG4).